We begin with the raw amino-acid sequence, 1013 residues long: Lysosomal alpha-mannosidase (1013 aa).

Positions 1-49 (MGTGPLTSGVRAGGGNTGWLWMSSCNLGSPVLPISFLFWLLLAAPGARA) are cleaved as a signal peptide. Cystine bridges form between C55-C358 and C268-C273. Residues H72, D74, and D196 each coordinate Zn(2+). D196 serves as the catalytic Nucleophile. N310, N345, and N367 each carry an N-linked (GlcNAc...) asparagine glycan. Residues C412 and C472 are joined by a disulfide bond. A Zn(2+)-binding site is contributed by H446. N-linked (GlcNAc...) asparagine glycosylation is found at N489, N497, N544, N633, N646, N693, N767, and N931. C493 and C501 are disulfide-bonded.

This sequence belongs to the glycosyl hydrolase 38 family. Requires Zn(2+) as cofactor.

Its subcellular location is the lysosome. The enzyme catalyses Hydrolysis of terminal, non-reducing alpha-D-mannose residues in alpha-D-mannosides.. Necessary for the catabolism of N-linked carbohydrates released during glycoprotein turnover. This is Lysosomal alpha-mannosidase (Man2b1) from Mus musculus (Mouse).